The following is a 68-amino-acid chain: Large ribosomal subunit protein uL29c (68 aa).

It belongs to the universal ribosomal protein uL29 family.

It is found in the plastid. Its subcellular location is the chloroplast. The protein is Large ribosomal subunit protein uL29c of Pyropia yezoensis (Susabi-nori).